The sequence spans 191 residues: dCTP deaminase (191 aa).

DCTP contacts are provided by residues 112 to 117 (KSTYAR), 136 to 138 (TLE), glutamine 157, tyrosine 173, and glutamine 183. The Proton donor/acceptor role is filled by glutamate 138.

It belongs to the dCTP deaminase family. Homotrimer.

The catalysed reaction is dCTP + H2O + H(+) = dUTP + NH4(+). Its pathway is pyrimidine metabolism; dUMP biosynthesis; dUMP from dCTP (dUTP route): step 1/2. Catalyzes the deamination of dCTP to dUTP. This is dCTP deaminase from Psychrobacter cryohalolentis (strain ATCC BAA-1226 / DSM 17306 / VKM B-2378 / K5).